A 183-amino-acid chain; its full sequence is Ribosome maturation factor RimM (183 aa).

Residues 105-181 form the PRC barrel domain; the sequence is ANEYHLMDLI…RIEIDPPLGL (77 aa).

The protein belongs to the RimM family. As to quaternary structure, binds ribosomal protein uS19.

It is found in the cytoplasm. Its function is as follows. An accessory protein needed during the final step in the assembly of 30S ribosomal subunit, possibly for assembly of the head region. Essential for efficient processing of 16S rRNA. May be needed both before and after RbfA during the maturation of 16S rRNA. It has affinity for free ribosomal 30S subunits but not for 70S ribosomes. In Thermosynechococcus vestitus (strain NIES-2133 / IAM M-273 / BP-1), this protein is Ribosome maturation factor RimM.